Consider the following 424-residue polypeptide: Enolase (424 aa).

A (2R)-2-phosphoglycerate-binding site is contributed by Gln-162. Catalysis depends on Glu-204, which acts as the Proton donor. Mg(2+) contacts are provided by Asp-241, Glu-284, and Asp-311. (2R)-2-phosphoglycerate contacts are provided by Lys-336, Arg-365, Ser-366, and Lys-387. The active-site Proton acceptor is Lys-336.

The protein belongs to the enolase family. It depends on Mg(2+) as a cofactor.

It is found in the cytoplasm. The protein localises to the secreted. Its subcellular location is the cell surface. It carries out the reaction (2R)-2-phosphoglycerate = phosphoenolpyruvate + H2O. It participates in carbohydrate degradation; glycolysis; pyruvate from D-glyceraldehyde 3-phosphate: step 4/5. In terms of biological role, catalyzes the reversible conversion of 2-phosphoglycerate (2-PG) into phosphoenolpyruvate (PEP). It is essential for the degradation of carbohydrates via glycolysis. This is Enolase from Rhizobium etli (strain ATCC 51251 / DSM 11541 / JCM 21823 / NBRC 15573 / CFN 42).